A 609-amino-acid polypeptide reads, in one-letter code: Alpha-fetoprotein (609 aa).

The first 18 residues, 1 to 18 (MKWVESIFLIFLLNFTES), serve as a signal peptide directing secretion. Albumin domains are found at residues 19–210 (RTLH…ATVT), 211–402 (KELR…EELQ), and 403–601 (KYIQ…KLIS). A Cu(2+)-binding site is contributed by H22. Cystine bridges form between C99–C114, C113–C124, C148–C193, C192–C201, C224–C270, C269–C277, C289–C303, and C302–C313. S111, S115, and S117 each carry phosphoserine; by FAM20C. N251 is a glycosylation site (N-linked (GlcNAc...) asparagine). S344 bears the Phosphoserine; by FAM20C mark. Disulfide bonds link C384–C393, C416–C462, C461–C472, C485–C501, C500–C511, C538–C583, and C582–C591. 2 positions are modified to phosphoserine; by FAM20C: S444 and S445.

It belongs to the ALB/AFP/VDB family. Dimeric and trimeric forms have been found in addition to the monomeric form. Independent studies suggest heterogeneity of the N-terminal sequence of the mature protein and of the cleavage site of the signal sequence. Post-translationally, sulfated. As to expression, plasma. Synthesized by the fetal liver and yolk sac.

It localises to the secreted. Binds copper, nickel, and fatty acids as well as, and bilirubin less well than, serum albumin. Only a small percentage (less than 2%) of the human AFP shows estrogen-binding properties. This chain is Alpha-fetoprotein (AFP), found in Homo sapiens (Human).